The primary structure comprises 140 residues: Putative pre-16S rRNA nuclease (140 aa).

It belongs to the YqgF nuclease family.

It is found in the cytoplasm. Functionally, could be a nuclease involved in processing of the 5'-end of pre-16S rRNA. The chain is Putative pre-16S rRNA nuclease from Yersinia pseudotuberculosis serotype IB (strain PB1/+).